Here is a 224-residue protein sequence, read N- to C-terminus: Claudin-17 (224 aa).

The Cytoplasmic segment spans residues Met1–Gln7. Residues Ile8–Pro28 form a helical membrane-spanning segment. Residues Gln29–Arg81 are Extracellular-facing. A helical transmembrane segment spans residues Ala82–Met102. Over Lys103–Val124 the chain is Cytoplasmic. Residues Leu125 to Ile145 traverse the membrane as a helical segment. The Extracellular segment spans residues Arg146–Ala164. A helical transmembrane segment spans residues Leu165–Tyr185. Residues Cys186–Val224 are Cytoplasmic-facing.

This sequence belongs to the claudin family. As to quaternary structure, does not form homotypic polymeric strands and it is not sufficient to form tight junctions by its own. Interacts with OCLN. Expressed at high levels in the kidney and at mucher lower levels in the brain. In the kidney, expression gradually decreases from the proximal tubule downstream to the distal convoluted tubule. Expressed in the thin ascending limb of Henle's loop, as well as in the thick ascending limb of Henle's loop. In the distal convoluted tubules, expressed only in a few tubules. Not detected in the collecting duct. In the brain, expressed in blood vessels (at protein level).

Its subcellular location is the cell junction. It is found in the tight junction. It localises to the cell membrane. It catalyses the reaction chloride(in) = chloride(out). The enzyme catalyses hydrogencarbonate(in) = hydrogencarbonate(out). The catalysed reaction is bromide(in) = bromide(out). It carries out the reaction iodide(out) = iodide(in). It catalyses the reaction fluoride(in) = fluoride(out). The enzyme catalyses nitrate(in) = nitrate(out). The catalysed reaction is thiocyanate(in) = thiocyanate(out). Its function is as follows. Channel-forming tight junction protein with selectivity for anions, including chloride and hydrogencarbonate, and for solutes smaller than 9 Angstrom in diameter. In the kidney proximal tubule, may be involved in quantitative reabsorption of filtered anions. Does not affect water permeability. This is Claudin-17 (Cldn17) from Mus musculus (Mouse).